Here is a 170-residue protein sequence, read N- to C-terminus: Crossover junction endodeoxyribonuclease RuvC (170 aa).

Residues D9, E70, and D145 contribute to the active site. D9, E70, and D145 together coordinate Mg(2+).

It belongs to the RuvC family. As to quaternary structure, homodimer which binds Holliday junction (HJ) DNA. The HJ becomes 2-fold symmetrical on binding to RuvC with unstacked arms; it has a different conformation from HJ DNA in complex with RuvA. In the full resolvosome a probable DNA-RuvA(4)-RuvB(12)-RuvC(2) complex forms which resolves the HJ. Requires Mg(2+) as cofactor.

It localises to the cytoplasm. It carries out the reaction Endonucleolytic cleavage at a junction such as a reciprocal single-stranded crossover between two homologous DNA duplexes (Holliday junction).. Its function is as follows. The RuvA-RuvB-RuvC complex processes Holliday junction (HJ) DNA during genetic recombination and DNA repair. Endonuclease that resolves HJ intermediates. Cleaves cruciform DNA by making single-stranded nicks across the HJ at symmetrical positions within the homologous arms, yielding a 5'-phosphate and a 3'-hydroxyl group; requires a central core of homology in the junction. The consensus cleavage sequence is 5'-(A/T)TT(C/G)-3'. Cleavage occurs on the 3'-side of the TT dinucleotide at the point of strand exchange. HJ branch migration catalyzed by RuvA-RuvB allows RuvC to scan DNA until it finds its consensus sequence, where it cleaves and resolves the cruciform DNA. The protein is Crossover junction endodeoxyribonuclease RuvC of Chlamydia trachomatis serovar A (strain ATCC VR-571B / DSM 19440 / HAR-13).